Consider the following 675-residue polypeptide: Putative L-type lectin-domain containing receptor kinase I.11 (675 aa).

Residues 1–22 (MASERLHLILLVFFNHLTFLLS) form the signal peptide. Residues 23–292 (QQEEAGFIYN…PKAKQEQTSP (270 aa)) lie on the Extracellular side of the membrane. Positions 27–263 (AGFIYNGFGQ…YQYILGWSFS (237 aa)) are legume-lectin like. N-linked (GlcNAc...) asparagine glycans are attached at residues Asn60, Asn129, Asn186, Asn209, and Asn230. Residues 293–313 (LLIVLLMLLVLIMLAVLGGIY) form a helical membrane-spanning segment. Residues 314–675 (LYRRKKYAEV…THTITYGDGR (362 aa)) are Cytoplasmic-facing. The Protein kinase domain maps to 348-620 (FDKDGRLGKG…QVIQYINQNL (273 aa)). ATP is bound by residues 354 to 362 (LGKGGFGEV) and Lys376. The Proton acceptor role is filled by Asp472.

It in the C-terminal section; belongs to the protein kinase superfamily. Ser/Thr protein kinase family. In the N-terminal section; belongs to the leguminous lectin family.

The protein resides in the cell membrane. It carries out the reaction L-seryl-[protein] + ATP = O-phospho-L-seryl-[protein] + ADP + H(+). The catalysed reaction is L-threonyl-[protein] + ATP = O-phospho-L-threonyl-[protein] + ADP + H(+). The chain is Putative L-type lectin-domain containing receptor kinase I.11 (LECRK111) from Arabidopsis thaliana (Mouse-ear cress).